The sequence spans 379 residues: MKLVQFFEIGQQLLKTKDFVEKNKNTTVVTLSYEKLLTLQNSTGGDNLQVTATLPNPSPEIFKKMIAIVSNLRKEENGFFATNQMGTSSNRAKSTDTPAVSTSQNVGGANEPKTILISKFLNKFILLLPFFKNSLQTLSDRLVQQEKMLKELNSTFTKITESQKSLKQLYKKTISQYAVVSSKFIVQQNNFKKFQKNLKQFASEQRLLKFLPKLRYLPTSQTKMYEIVELFMKKFVDPKLSYPMEQIYDQKLKFTSKKIAATRKQKWQRLEKYFGGITKMAKMNTKQISKNVAIIIGQQEEMNAVHECRKLGMKIFAVVDTNCNPKFVDHIIPANDDSRNSIKYILGEMLTYIRLGQKLRKKVSLRAKIQQNRKKRFAY.

The N-terminal extension stretch occupies residues 1–94; the sequence is MKLVQFFEIG…MGTSSNRAKS (94 aa). Residues 83-106 form a disordered region; sequence NQMGTSSNRAKSTDTPAVSTSQNV.

This sequence belongs to the universal ribosomal protein uS2 family.

It localises to the plastid. Its subcellular location is the chloroplast. This chain is Small ribosomal subunit protein uS2cy (rps2-2), found in Tetradesmus obliquus (Green alga).